A 204-amino-acid chain; its full sequence is Inositol diphosphatase DSP5 (204 aa).

Positions 19–168 constitute a Tyrosine-protein phosphatase domain; it reads NFSMVEDEIY…FDVLRLKQCL (150 aa). The WPD loop important for active site topology stretch occupies residues 75–87; it reads FGIEGKTDPPTPM. The Phosphocysteine intermediate role is filled by cysteine 111.

This sequence belongs to the protein-tyrosine phosphatase family. Atypical dual-specificity phosphatase Siw14-like subfamily. In terms of tissue distribution, highly expressed in flowers. Expressed at low levels in roots, leaves, stems and siliques.

It catalyses the reaction 5-diphospho-1D-myo-inositol 1,2,3,4,6-pentakisphosphate + H2O = 1D-myo-inositol hexakisphosphate + phosphate + H(+). It carries out the reaction 1,5-bis(diphospho)-1D-myo-inositol 2,3,4,6-tetrakisphosphate + H2O = 1-diphospho-1D-myo-inositol 2,3,4,5,6-pentakisphosphate + phosphate + 2 H(+). The catalysed reaction is 3,5-bis(diphospho)-1D-myo-inositol 1,2,4,6-tetrakisphosphate + H2O = 3-diphospho-1D-myo-inositol 1,2,4,5,6-pentakisphosphate + phosphate + 2 H(+). The enzyme catalyses 6-diphospho-1D-myo-inositol pentakisphosphate + H2O = 1D-myo-inositol hexakisphosphate + phosphate + H(+). Functionally, cleaves the beta-phosphate at the 5-position of soluble inositol pyrophosphates. Has highest activity on 5-diphosphoinositol 1,2,3,4,6-pentakisphosphate (5-InsP(7)). Possesses low phosphotyrosine phosphatase activity in vitro. Dephosphorylates the phosphoinositides PI(3,5)P2. Hydrolyzes O-methylfluorescein phosphate in vitro. The polypeptide is Inositol diphosphatase DSP5 (Arabidopsis thaliana (Mouse-ear cress)).